A 364-amino-acid chain; its full sequence is UDP-N-acetylglucosamine--N-acetylmuramyl-(pentapeptide) pyrophosphoryl-undecaprenol N-acetylglucosamine transferase (364 aa).

Residues 10–12 (TGG), Asn-124, Arg-165, Ser-193, Ile-248, and Gln-293 contribute to the UDP-N-acetyl-alpha-D-glucosamine site.

It belongs to the glycosyltransferase 28 family. MurG subfamily.

The protein localises to the cell inner membrane. The catalysed reaction is di-trans,octa-cis-undecaprenyl diphospho-N-acetyl-alpha-D-muramoyl-L-alanyl-D-glutamyl-meso-2,6-diaminopimeloyl-D-alanyl-D-alanine + UDP-N-acetyl-alpha-D-glucosamine = di-trans,octa-cis-undecaprenyl diphospho-[N-acetyl-alpha-D-glucosaminyl-(1-&gt;4)]-N-acetyl-alpha-D-muramoyl-L-alanyl-D-glutamyl-meso-2,6-diaminopimeloyl-D-alanyl-D-alanine + UDP + H(+). It participates in cell wall biogenesis; peptidoglycan biosynthesis. In terms of biological role, cell wall formation. Catalyzes the transfer of a GlcNAc subunit on undecaprenyl-pyrophosphoryl-MurNAc-pentapeptide (lipid intermediate I) to form undecaprenyl-pyrophosphoryl-MurNAc-(pentapeptide)GlcNAc (lipid intermediate II). The chain is UDP-N-acetylglucosamine--N-acetylmuramyl-(pentapeptide) pyrophosphoryl-undecaprenol N-acetylglucosamine transferase from Geobacter sulfurreducens (strain ATCC 51573 / DSM 12127 / PCA).